Consider the following 238-residue polypeptide: Pyridoxine 5'-phosphate synthase (238 aa).

Asn-9 serves as a coordination point for 3-amino-2-oxopropyl phosphate. 11–12 lines the 1-deoxy-D-xylulose 5-phosphate pocket; sequence DH. Arg-20 lines the 3-amino-2-oxopropyl phosphate pocket. His-45 serves as the catalytic Proton acceptor. Arg-47 and His-52 together coordinate 1-deoxy-D-xylulose 5-phosphate. The active-site Proton acceptor is Glu-72. Thr-102 contacts 1-deoxy-D-xylulose 5-phosphate. Residue His-189 is the Proton donor of the active site. Residues Gly-190 and 211–212 contribute to the 3-amino-2-oxopropyl phosphate site; that span reads GH.

Belongs to the PNP synthase family. As to quaternary structure, homooctamer; tetramer of dimers.

It is found in the cytoplasm. It carries out the reaction 3-amino-2-oxopropyl phosphate + 1-deoxy-D-xylulose 5-phosphate = pyridoxine 5'-phosphate + phosphate + 2 H2O + H(+). It functions in the pathway cofactor biosynthesis; pyridoxine 5'-phosphate biosynthesis; pyridoxine 5'-phosphate from D-erythrose 4-phosphate: step 5/5. Its function is as follows. Catalyzes the complicated ring closure reaction between the two acyclic compounds 1-deoxy-D-xylulose-5-phosphate (DXP) and 3-amino-2-oxopropyl phosphate (1-amino-acetone-3-phosphate or AAP) to form pyridoxine 5'-phosphate (PNP) and inorganic phosphate. The sequence is that of Pyridoxine 5'-phosphate synthase from Ehrlichia canis (strain Jake).